Here is a 350-residue protein sequence, read N- to C-terminus: Serine/threonine-protein kinase SRK2F (350 aa).

One can recognise a Protein kinase domain in the interval Y4–F260. Residues L10–A18 and K33 contribute to the ATP site. D123 functions as the Proton acceptor in the catalytic mechanism. A coiled-coil region spans residues E270 to R303.

This sequence belongs to the protein kinase superfamily. Ser/Thr protein kinase family. As to expression, expressed in seedlings.

The catalysed reaction is L-seryl-[protein] + ATP = O-phospho-L-seryl-[protein] + ADP + H(+). It catalyses the reaction L-threonyl-[protein] + ATP = O-phospho-L-threonyl-[protein] + ADP + H(+). The protein is Serine/threonine-protein kinase SRK2F (SRK2F) of Arabidopsis thaliana (Mouse-ear cress).